Here is a 324-residue protein sequence, read N- to C-terminus: Bile salt hydrolase/transferase (324 aa).

Catalysis depends on cysteine 2, which acts as the Nucleophile; acyl-thioester intermediate. Residues cysteine 2 and arginine 16 each contribute to the deoxycholate site. Residue asparagine 79 coordinates taurine.

The protein belongs to the peptidase C59 family. Homotetramer. The tetramer consists of a dimer of dimers.

The enzyme catalyses glycocholate + H2O = cholate + glycine. The catalysed reaction is glycodeoxycholate + H2O = deoxycholate + glycine. It carries out the reaction chenodeoxycholate + glycine = glycochenodeoxycholate + H2O. It catalyses the reaction cholate + taurine = taurocholate + H2O. The enzyme catalyses taurodeoxycholate + H2O = deoxycholate + taurine. The catalysed reaction is taurochenodeoxycholate + H2O = chenodeoxycholate + taurine. It carries out the reaction an L-alpha-amino acid + cholate = an N-choloyl-L-alpha-amino acid + H2O. It catalyses the reaction an L-alpha-amino acid + taurocholate = an N-choloyl-L-alpha-amino acid + taurine. The enzyme catalyses glycocholate + an L-alpha-amino acid = an N-choloyl-L-alpha-amino acid + glycine. Its pathway is lipid metabolism; bile acid biosynthesis. In terms of biological role, possesses dual functions in bile acid metabolism. Acts as a bile salt hydrolase that catalyzes the deconjugation of glycine- and taurine-linked bile salts, which occurs naturally in the intestines of animals, releasing amino acid residues and deconjugated bile salts (bile acids). Can hydrolyze the amide bond in the bile salts glycocholate (GCA), glycodeoxycholate (GDCA), glycochenodeoxycholate (GCDCA), taurocholate (TCA), taurodeoxycholate (TDCA) and taurochenodeoxycholate (TCDCA). Shows a preference for glycine-conjugated bile acids as substrates. Also acts as an amine N-acyltransferase that conjugates a wide variety of amino acids to conjugated and non-conjugated bile acids, thus producing bacterial bile acid amidates (BBAAs) - also named microbially conjugated bile acids (MCBAs) - in the gastrointestinal tract. These BBAAs may facilitate communication between the microbiota and host through the activation of host ligand-activated transcription factors. In Lactiplantibacillus plantarum (strain ATCC BAA-793 / NCIMB 8826 / WCFS1) (Lactobacillus plantarum), this protein is Bile salt hydrolase/transferase.